The following is a 593-amino-acid chain: Transcription factor ATEG_07667 (593 aa).

The segment at residues 18-47 is a DNA-binding region (zn(2)-C6 fungal-type); it reads CTQCYKAKCRCVRTPSGDTCERCIRLKKRC.

It is found in the nucleus. In terms of biological role, transcriptional regulator that regulates both the azasperpyranone A biosynthesis clusters A and B. Specifically up-regulates the expression of the cluster A and B specific transcription factors ATEG_03638 and ATEG_07666, which in turn activate the expression of their respective clusters. This chain is Transcription factor ATEG_07667, found in Aspergillus terreus (strain NIH 2624 / FGSC A1156).